We begin with the raw amino-acid sequence, 200 residues long: 3-isopropylmalate dehydratase small subunit 2 (200 aa).

This sequence belongs to the LeuD family. LeuD type 1 subfamily. Heterodimer of LeuC and LeuD.

It carries out the reaction (2R,3S)-3-isopropylmalate = (2S)-2-isopropylmalate. It participates in amino-acid biosynthesis; L-leucine biosynthesis; L-leucine from 3-methyl-2-oxobutanoate: step 2/4. In terms of biological role, catalyzes the isomerization between 2-isopropylmalate and 3-isopropylmalate, via the formation of 2-isopropylmaleate. In Mannheimia succiniciproducens (strain KCTC 0769BP / MBEL55E), this protein is 3-isopropylmalate dehydratase small subunit 2.